A 431-amino-acid polypeptide reads, in one-letter code: Glucose-1-phosphate adenylyltransferase (431 aa).

Residues G163, 178 to 179 (EK), and S210 contribute to the alpha-D-glucose 1-phosphate site.

This sequence belongs to the bacterial/plant glucose-1-phosphate adenylyltransferase family. In terms of assembly, homotetramer.

The catalysed reaction is alpha-D-glucose 1-phosphate + ATP + H(+) = ADP-alpha-D-glucose + diphosphate. The protein operates within glycan biosynthesis; glycogen biosynthesis. Functionally, involved in the biosynthesis of ADP-glucose, a building block required for the elongation reactions to produce glycogen. Catalyzes the reaction between ATP and alpha-D-glucose 1-phosphate (G1P) to produce pyrophosphate and ADP-Glc. This chain is Glucose-1-phosphate adenylyltransferase, found in Synechococcus sp. (strain WH7803).